Consider the following 469-residue polypeptide: MVNEEMESSLKVIDVARVTPSNSDSSESLTLPLTFFDLLWYKLHAVERVIFYKLTDASRPFFDSVIVPNLKTSLSSSLSHYLPLAGKLVWEPLDPKPKIVYTPNDAVSFTVAESNADFSRLTGKEPFPTTELYPLVPELHVSDDSASAVSFQVTLFPNQGFCISVNAHHAVLDGKTTTNFLKSWARTCKNQDSFLPQDLIPVYDRTVIKDPMDLDTKILNAWHRVAKVFTGGKEPENPKSLKLLWSPEIGPDVFRYTLNLTREDIQKLRERLKKESSSSSVSSSPKELRLSTFVIVYSYALTCLIKARGGDPSRPVGYGFAVDCRSLMVPPVPSSYFGNCVSACFKMSLTAETFMSEEGFLAAARMVSDSVEALDENVALKIPEILEGFTTLSPGTQVLSVAGSTRFGVYGLDFGWGRPEKVVVVSIDQGEAISFAESRDGSGGVELGFSLKKHEMDVLVDLLHKGLEN.

M1 is subject to N-acetylmethionine. H169 acts as the Proton acceptor in catalysis. Positions 169–173 (HAVLD) match the HXXXD motif motif. 291–292 (ST) contributes to the malonyl-CoA binding site. D413 (proton acceptor) is an active-site residue. A DFGWG motif motif is present at residues 413-417 (DFGWG).

The protein belongs to the plant acyltransferase family. Phenolic glucoside malonyltransferase subfamily.

The enzyme catalyses a flavonol 3-O-beta-D-glucoside + malonyl-CoA = a flavonol 3-O-(6-O-malonyl-beta-D-glucoside) + CoA. It catalyses the reaction a flavonol 7-O-beta-D-glucoside + malonyl-CoA = a flavonol 7-O-(6-O-malonyl-beta-D-glucoside) + CoA. Its function is as follows. Malonyltransferase acting on xenobiotic glucosides. Has activity toward 2-Naphthol glucoside (2NAG), 1-Naphthol glucoside (1NAG), kaempferol 7-O-glucoside, kaempferol 3-O-glucoside, hydroxycoumarin glucosides, phenol-glucosides and isoflavone glucoside (daidzin), but not toward 4-coumaroyl glucoside, kaempferol 3,7-O-diglucoside, salicylic acid glucoside and phlorizin. In vivo, seems to be involved in the malonylation of 2-Naphthol glucoside while PMAT2 would be involved in the malonylation of 4-methylumbelliferone glucoside or 4-nitrophenyl glucoside. This is Phenolic glucoside malonyltransferase 1 (PMAT1) from Arabidopsis thaliana (Mouse-ear cress).